The following is a 258-amino-acid chain: Thyroxine 5-deiodinase (258 aa).

The helical; Signal-anchor for type II membrane protein transmembrane segment at 1–20 threads the bilayer; sequence AACILLFPRFLLTAVMLWLL. Topologically, residues 21-258 are extracellular; sequence DFLCIRKKML…QSPGAVVIQV (238 aa). Residue Sec122 is part of the active site. Residue Sec122 is a non-standard amino acid, selenocysteine.

This sequence belongs to the iodothyronine deiodinase family. In terms of assembly, monomer. Homodimer. May undergo minor heretodimerization with DIO1 and DIO2.

The protein resides in the cell membrane. It is found in the endosome membrane. The enzyme catalyses 3,3',5'-triiodo-L-thyronine + iodide + A + H(+) = L-thyroxine + AH2. It catalyses the reaction 3,3'-diiodo-L-thyronine + iodide + A + H(+) = 3,3',5-triiodo-L-thyronine + AH2. The catalysed reaction is 3-iodo-L-thyronine + iodide + A + H(+) = 3,5-diiodo-L-thyronine + AH2. It carries out the reaction L-thyronine + iodide + A + H(+) = 3-iodo-L-thyronine + AH2. The enzyme catalyses 3',5'-diiodo-L-thyronine + iodide + A + H(+) = 3,3',5'-triiodo-L-thyronine + AH2. It catalyses the reaction 3'-iodo-L-thyronine + iodide + A + H(+) = 3,3'-diiodo-L-thyronine + AH2. The catalysed reaction is 3,3',5'-triiodothyronamine + iodide + A + H(+) = 3,3',5,5'-tetraiodothyronamine + AH2. It carries out the reaction 3',5'-diiodothyronamine + iodide + A + H(+) = 3,3',5'-triiodothyronamine + AH2. The enzyme catalyses 3,3'-diiodothyronamine + iodide + A + H(+) = 3,3',5-triiodothyronamine + AH2. It catalyses the reaction 3-iodothyronamine + iodide + A + H(+) = 3,5-diiodothyronamine + AH2. The catalysed reaction is 3'-iodothyronamine + iodide + A + H(+) = 3,3'-diiodothyronamine + AH2. It carries out the reaction thyronamine + iodide + A + H(+) = 3-iodothyronamine + AH2. Functionally, plays a crucial role in the metabolism of thyroid hormones (TH) and has specific roles in TH activation and inactivation by deiodination. Catalyzes the deiodination of L-thyroxine (T4) to 3,3',5'-triiodothyronine (rT3) and 3,5,3'-triiodothyronine (T3) to 3,3'-diiodothyronine (3,3'-T2) via inner-ring deiodination (IRD). Catalyzes the deiodination of rT3 to 3',5'-diiodothyronine (3',5'-T2), 3,3'-T2 to 3'-monoiodothyronine (3'-T1) and 3,5-diiodothyronine (3,5-T2) to 3-monoiodothyronine (3-T1) via IRD. Catalyzes the deiodination of 3-T1 to L-thyronine (T0) via outer-ring deiodination (ORD). Catalyzes the tyrosyl ring deiodinations of 3,3',5,5'-tetraiodothyronamine, 3,3',5'-triiodothyronamine, 3,5,3'-triiodothyronamine, 3,5-diiodothyronamine, 3,3'-diiodothyronamine and 3-iodothyronamine. The chain is Thyroxine 5-deiodinase (DIO3) from Gallus gallus (Chicken).